Reading from the N-terminus, the 661-residue chain is Kininogen-1 (661 aa).

The first 20 residues, 1–20, serve as a signal peptide directing secretion; that stretch reads MKLITTLLLCSGLLLTLTQG. Residues 28 to 131 form the Cystatin kininogen-type 1 domain; sequence CNDEAVFQAV…TQTCKIAPSK (104 aa). Intrachain disulfides connect Cys-28–Cys-631, Cys-83–Cys-94, Cys-107–Cys-125, Cys-141–Cys-144, Cys-205–Cys-217, Cys-228–Cys-247, Cys-263–Cys-266, Cys-327–Cys-339, and Cys-350–Cys-369. N-linked (GlcNAc...) asparagine glycosylation occurs at Asn-82. Residues 150-253 enclose the Cystatin kininogen-type 2 domain; it reads TDSPDLEPVL…SQSCTLYSGD (104 aa). Residues Asn-168 and Asn-204 are each glycosylated (N-linked (GlcNAc...) asparagine). Asn-242 is a glycosylation site (N-linked (GlcNAc...) asparagine). Residues 272–375 form the Cystatin kininogen-type 3 domain; the sequence is VDSPELKEVL…TVKCQALDMT (104 aa). Ser-331 carries the post-translational modification Phosphoserine. Disordered regions lie at residues 405 to 471, 485 to 583, and 626 to 661; these read YIAR…LGHG, DGDD…FQDS, and ATSPKCPGRPWKPASWEDPNTETTEFSDFDLLDALS. Basic residues-rich tracts occupy residues 434-471 and 492-526; these read KANKNHRGHKHGHDHGHWSPRRHGLGHGHQKPHGLGHG and TVGHGHGHGHGHGHGHGHGHGHGHGHGHGHGHGKH. The segment covering 541-555 has biased composition (low complexity); sequence TESLASSSEYSTTST. The segment covering 650–661 has biased composition (acidic residues); sequence EFSDFDLLDALS.

As to quaternary structure, isoform LMW interacts with CRISP3. In terms of processing, bradykinin is released from kininogen by plasma kallikrein. Phosphorylated by FAM20C in the extracellular medium. Post-translationally, bradykinin is inactivated by ACE, which removes the dipeptide Arg-Phe from its C-terminus. As to expression, plasma.

It is found in the secreted. The protein localises to the extracellular space. Kininogens are inhibitors of thiol proteases. HMW-kininogen plays an important role in blood coagulation by helping to position optimally prekallikrein and factor XI next to factor XII; HMW-kininogen inhibits the thrombin- and plasmin-induced aggregation of thrombocytes. LMW-kininogen inhibits the aggregation of thrombocytes. LMW-kininogen is in contrast to HMW-kininogen not involved in blood clotting. In terms of biological role, the active peptide bradykinin is a potent vasodilatator that is released from HMW-kininogen shows a variety of physiological effects: (A) influence in smooth muscle contraction, (B) induction of hypotension, (C) natriuresis and diuresis, (D) decrease in blood glucose level, (E) it is a mediator of inflammation and causes (E1) increase in vascular permeability, (E2) stimulation of nociceptors (4E3) release of other mediators of inflammation (e.g. prostaglandins), (F) it has a cardioprotective effect (directly via bradykinin action, indirectly via endothelium-derived relaxing factor action). The polypeptide is Kininogen-1 (Kng1) (Mus musculus (Mouse)).